A 291-amino-acid chain; its full sequence is 4-diphosphocytidyl-2-C-methyl-D-erythritol kinase (291 aa).

Residue lysine 12 is part of the active site. 95 to 105 (PDGGGLGGGSS) contributes to the ATP binding site. Aspartate 137 is a catalytic residue.

This sequence belongs to the GHMP kinase family. IspE subfamily.

The enzyme catalyses 4-CDP-2-C-methyl-D-erythritol + ATP = 4-CDP-2-C-methyl-D-erythritol 2-phosphate + ADP + H(+). The protein operates within isoprenoid biosynthesis; isopentenyl diphosphate biosynthesis via DXP pathway; isopentenyl diphosphate from 1-deoxy-D-xylulose 5-phosphate: step 3/6. Functionally, catalyzes the phosphorylation of the position 2 hydroxy group of 4-diphosphocytidyl-2C-methyl-D-erythritol. This Alkalilimnicola ehrlichii (strain ATCC BAA-1101 / DSM 17681 / MLHE-1) protein is 4-diphosphocytidyl-2-C-methyl-D-erythritol kinase.